The chain runs to 191 residues: Adenylate kinase (191 aa).

ATP is bound at residue 12–17; it reads GSGKTT. Positions 34–63 are NMP; it reads STGDLLRAESAKKTERGLLIEKFTSQGELV. Residues Thr35, Arg40, 61–63, 88–91, and Gln95 each bind AMP; these read ELV and GYPR. The tract at residues 130–136 is LID; sequence GRSRGAD. Residue Arg131 coordinates ATP. Arg133 and Arg145 together coordinate AMP. Arg173 contacts ATP.

Belongs to the adenylate kinase family. As to quaternary structure, monomer.

It is found in the cytoplasm. The catalysed reaction is AMP + ATP = 2 ADP. It participates in purine metabolism; AMP biosynthesis via salvage pathway; AMP from ADP: step 1/1. Catalyzes the reversible transfer of the terminal phosphate group between ATP and AMP. Plays an important role in cellular energy homeostasis and in adenine nucleotide metabolism. This chain is Adenylate kinase, found in Helicobacter pylori (strain G27).